We begin with the raw amino-acid sequence, 24 residues long: MFFSSKKCKTVXKTFRGPCVRNAN.

Belongs to the DEFL family. Group IV subfamily. As to expression, distributed in the epidermal cell layer of leaves and in the subepidermal layer region of stems. Not in roots.

It is found in the secreted. Its subcellular location is the cell wall. In terms of biological role, antimicrobial peptide. Active against Fusarium spp., Gram-positive and Gram-negative bacterial pathogens. The sequence is that of Defensin D5 from Spinacia oleracea (Spinach).